A 948-amino-acid chain; its full sequence is UvrABC system protein A (948 aa).

33-40 is an ATP binding site; sequence GLSGSGKS. The C4-type zinc finger occupies 252-279; that stretch reads CPICGFSIGELEPRMFSFNSPFGACPTC. 2 consecutive ABC transporter domains span residues 309 to 587 and 607 to 935; these read WIPT…KKSL and ASDR…KYLK. 639-646 contacts ATP; that stretch reads GVSGSGKS. The C4-type zinc-finger motif lies at 738–764; it reads CEACKGDGIIKIEMHFLPDVYVPCEVC.

It belongs to the ABC transporter superfamily. UvrA family. Forms a heterotetramer with UvrB during the search for lesions.

Its subcellular location is the cytoplasm. Its function is as follows. The UvrABC repair system catalyzes the recognition and processing of DNA lesions. UvrA is an ATPase and a DNA-binding protein. A damage recognition complex composed of 2 UvrA and 2 UvrB subunits scans DNA for abnormalities. When the presence of a lesion has been verified by UvrB, the UvrA molecules dissociate. This Staphylococcus aureus (strain MRSA252) protein is UvrABC system protein A.